A 508-amino-acid polypeptide reads, in one-letter code: Catalase (508 aa).

The N-terminal stretch at 1 to 21 (MHMSKSFLLISMGLASISVHA) is a signal peptide. Catalysis depends on residues His72 and Asn145. Tyr353 is a heme binding site. Polar residues predominate over residues 373–392 (PKSPVANHNQDGPSNNSTGL). The disordered stretch occupies residues 373 to 396 (PKSPVANHNQDGPSNNSTGLGNVD).

Belongs to the catalase family. Requires heme as cofactor.

It localises to the periplasm. It carries out the reaction 2 H2O2 = O2 + 2 H2O. Decomposes hydrogen peroxide into water and oxygen; serves to protect cells from the toxic effects of hydrogen peroxide. The polypeptide is Catalase (Vibrio vulnificus (strain CMCP6)).